Reading from the N-terminus, the 310-residue chain is Beta-1,3-galactosyltransferase 5 (310 aa).

The Cytoplasmic segment spans residues 1–7 (MAFPKMR). The helical; Signal-anchor for type II membrane protein transmembrane segment at 8-28 (LMYICLLVLGALCLYFSMYSL) threads the bilayer. The Lumenal segment spans residues 29–310 (NPFKEQSFVY…NSRGEDCPPV (282 aa)). Asn-130, Asn-174, and Asn-231 each carry an N-linked (GlcNAc...) asparagine glycan.

It belongs to the glycosyltransferase 31 family. Expressed in stomach, jejunum, colon, pancreas, small intestine, testis and gastrointestinal and pancreatic cancer cell lines. Hardly detected in lung, liver, adrenal gland and peripheral blood leukocytes.

The protein resides in the golgi apparatus membrane. The catalysed reaction is a globoside Gb4Cer (d18:1(4E)) + UDP-alpha-D-galactose = a globoside GalGb4Cer (d18:1(4E)) + UDP + H(+). It functions in the pathway protein modification; protein glycosylation. Functionally, catalyzes the transfer of Gal to GlcNAc-based acceptors with a preference for the core3 O-linked glycan GlcNAc(beta1,3)GalNAc structure. Can use glycolipid LC3Cer as an efficient acceptor. This chain is Beta-1,3-galactosyltransferase 5, found in Homo sapiens (Human).